Here is a 523-residue protein sequence, read N- to C-terminus: Cytochrome P450 CYP82J17 (523 aa).

Residues 4–24 traverse the membrane as a helical segment; it reads FLSQPITIVLAILSVLLYNIW. Cys462 is a binding site for heme.

This sequence belongs to the cytochrome P450 family. As to expression, mainly expressed in leaves and seed pods and, to a lower extent, in flowers and stems.

It localises to the membrane. It functions in the pathway steroid metabolism; cholesterol metabolism. In terms of biological role, involved in the biosynthesis of spiroketal steroid and saponin natural products from cholesterol such as diosgenin and analogs (e.g. furostanol and spirostanol), plant defense compounds used as main precursors for the industrial production of steroid hormones. During the 5,6-spiroketalization of cholesterol, may catalyze the 27-monohydroxylation of furostanol-type steroid to an intermediate product that undergoes a stereospecific formation of the terminal heterocycle to yield diosgenin. The protein is Cytochrome P450 CYP82J17 of Trigonella foenum-graecum (Fenugreek).